The primary structure comprises 236 residues: Purine nucleoside phosphorylase DeoD-type (236 aa).

Residue histidine 5 coordinates a purine D-ribonucleoside. Phosphate is bound by residues glycine 21, arginine 25, arginine 44, and 88–91; that span reads RVGT. Residues 180 to 182 and 204 to 205 contribute to the a purine D-ribonucleoside site; these read EME and SD. Aspartate 205 serves as the catalytic Proton donor.

Belongs to the PNP/UDP phosphorylase family. Homohexamer; trimer of homodimers.

The enzyme catalyses a purine D-ribonucleoside + phosphate = a purine nucleobase + alpha-D-ribose 1-phosphate. The catalysed reaction is a purine 2'-deoxy-D-ribonucleoside + phosphate = a purine nucleobase + 2-deoxy-alpha-D-ribose 1-phosphate. Catalyzes the reversible phosphorolytic breakdown of the N-glycosidic bond in the beta-(deoxy)ribonucleoside molecules, with the formation of the corresponding free purine bases and pentose-1-phosphate. The sequence is that of Purine nucleoside phosphorylase DeoD-type from Shewanella amazonensis (strain ATCC BAA-1098 / SB2B).